The following is a 240-amino-acid chain: HTH-type transcriptional regulator Mce2R (240 aa).

The HTH gntR-type domain occupies 9–77; it reads RSVPEEVFEQ…QGDVTTVRDF (69 aa). Residues 37-56 constitute a DNA-binding region (H-T-H motif); the sequence is ERRLAELLGVSRPAVREALK.

In terms of biological role, negatively regulates the expression of its operon as well as expression of end (endonuclease 4). The sequence is that of HTH-type transcriptional regulator Mce2R (mce2R) from Mycobacterium tuberculosis (strain CDC 1551 / Oshkosh).